Reading from the N-terminus, the 620-residue chain is Glutathione-regulated potassium-efflux system protein KefC (620 aa).

The next 12 helical transmembrane spans lie at H4–V24, L26–L46, S54–L74, G90–L110, V114–M134, F149–L169, L178–L198, V218–G238, G270–V290, L294–V314, W327–Q347, and A359–T379. The region spanning Q399–T518 is the RCK N-terminal domain. Positions Q599 to I620 are disordered.

The protein belongs to the monovalent cation:proton antiporter 2 (CPA2) transporter (TC 2.A.37) family. KefC subfamily. In terms of assembly, homodimer. Interacts with the regulatory subunit KefF.

The protein resides in the cell inner membrane. Pore-forming subunit of a potassium efflux system that confers protection against electrophiles. Catalyzes K(+)/H(+) antiport. The chain is Glutathione-regulated potassium-efflux system protein KefC from Salmonella dublin (strain CT_02021853).